The primary structure comprises 213 residues: 3-isopropylmalate dehydratase small subunit (213 aa).

The protein belongs to the LeuD family. LeuD type 1 subfamily. Heterodimer of LeuC and LeuD.

The catalysed reaction is (2R,3S)-3-isopropylmalate = (2S)-2-isopropylmalate. It participates in amino-acid biosynthesis; L-leucine biosynthesis; L-leucine from 3-methyl-2-oxobutanoate: step 2/4. In terms of biological role, catalyzes the isomerization between 2-isopropylmalate and 3-isopropylmalate, via the formation of 2-isopropylmaleate. The sequence is that of 3-isopropylmalate dehydratase small subunit from Neisseria meningitidis serogroup C / serotype 2a (strain ATCC 700532 / DSM 15464 / FAM18).